The following is a 301-amino-acid chain: MQTTRSTRLLSLARRFVHTRTASQSAQNSKGMASGAESISGKEKTTHFGFQTVRESEKEQKVHEVFEQVANSYDVMNDAMSLGIHRVWKDVFVERLGPTHGMRLLDMAGGTGDITFRYLRYLNNQPNPQQRPSHVTVSDINQHMLNVGEERAKRLGLTTDQLSNCTVAWQCADAEKLPFPDASFTAYTIAFGIRNCTHVDKVLSEAYRVLQPGGRFMCLEFSHLTNETMQWLYDQYSFQVIPPMGQLLAGQWQAYQYLVESIRRFPKQEQFKQMIEQAGFDQVSYENLTFGVVSIHSGFKL.

A mitochondrion-targeting transit peptide spans 1 to 16 (MQTTRSTRLLSLARRF). The span at 20-31 (RTASQSAQNSKG) shows a compositional bias: polar residues. Residues 20–44 (RTASQSAQNSKGMASGAESISGKEK) form a disordered region. Residues Thr-111, Asp-139, and 173–174 (DA) contribute to the S-adenosyl-L-methionine site.

The protein belongs to the class I-like SAM-binding methyltransferase superfamily. MenG/UbiE family. In terms of assembly, component of a multi-subunit COQ enzyme complex.

The protein localises to the mitochondrion inner membrane. It carries out the reaction a 2-methoxy-6-(all-trans-polyprenyl)benzene-1,4-diol + S-adenosyl-L-methionine = a 5-methoxy-2-methyl-3-(all-trans-polyprenyl)benzene-1,4-diol + S-adenosyl-L-homocysteine + H(+). It functions in the pathway cofactor biosynthesis; ubiquinone biosynthesis. In terms of biological role, methyltransferase required for the conversion of 2-polyprenyl-6-methoxy-1,4-benzoquinol (DDMQH2) to 2-polyprenyl-3-methyl-6-methoxy-1,4-benzoquinol (DMQH2). This Drosophila melanogaster (Fruit fly) protein is 2-methoxy-6-polyprenyl-1,4-benzoquinol methylase, mitochondrial.